The primary structure comprises 397 residues: Tryptophan synthase beta chain (397 aa).

Lys-87 carries the post-translational modification N6-(pyridoxal phosphate)lysine.

The protein belongs to the TrpB family. As to quaternary structure, tetramer of two alpha and two beta chains. Requires pyridoxal 5'-phosphate as cofactor.

The enzyme catalyses (1S,2R)-1-C-(indol-3-yl)glycerol 3-phosphate + L-serine = D-glyceraldehyde 3-phosphate + L-tryptophan + H2O. It participates in amino-acid biosynthesis; L-tryptophan biosynthesis; L-tryptophan from chorismate: step 5/5. The beta subunit is responsible for the synthesis of L-tryptophan from indole and L-serine. The polypeptide is Tryptophan synthase beta chain (Escherichia coli O17:K52:H18 (strain UMN026 / ExPEC)).